We begin with the raw amino-acid sequence, 551 residues long: Tetrachloroethene reductive dehalogenase (551 aa).

Residues 1–39 (MGEINRRNFLKVSILGAAAAAVASASAVKGMVSPLVADA) constitute a signal peptide (tat-type signal). One can recognise a 4Fe-4S ferredoxin-type 1 domain in the interval 411–440 (PRKFGVREFCRLCKKCADACPAQAISHEKD). Residues Cys-420, Cys-423, Cys-426, Cys-430, Cys-467, Cys-478, Cys-481, and Cys-485 each contribute to the [4Fe-4S] cluster site. Residues 478-496 (CSNCVAVCSWNKVETWNHD) form the 4Fe-4S ferredoxin-type 2 domain.

The protein belongs to the PceA family. Requires [4Fe-4S] cluster as cofactor. Corrinoid is required as a cofactor. In terms of processing, predicted to be exported by the Tat system. The position of the signal peptide cleavage has not been experimentally proven.

The protein resides in the cell membrane. The enzyme catalyses trichloroethene + chloride + A + H(+) = tetrachloroethene + AH2. It catalyses the reaction trichloroethene + AH2 = (Z)-1,2-dichloroethene + chloride + A + H(+). In terms of biological role, catalyzes the reductive dechlorination of tetrachloroethene (PCE) to trichloroethene (TCE) and of trichloroethene to cis-1,2-dichloroethene (DCE). The polypeptide is Tetrachloroethene reductive dehalogenase (Desulfitobacterium hafniense (Desulfitobacterium frappieri)).